The chain runs to 359 residues: Probable F-box protein At3g61730 (359 aa).

Composition is skewed to basic and acidic residues over residues 1 to 14 (MKTR…DSRG) and 37 to 48 (QKNDIQREEDGR). Residues 1-60 (MKTRSSDAEGDSRGKMIAPVGEGNGGRKRKLVQSNEQKNDIQREEDGRAKRRIVQSSDQK) are disordered. The region spanning 82 to 128 (QSRFSWYEQDIWTYISRFLDGKSLVKLGATNKWFYKIAMEDTVWRFA) is the F-box; degenerate domain.

As to quaternary structure, interacts with SKP1A. As to expression, expressed in flower buds, developing anthers, pollen grains, siliques, rosette leaves and roots. Detected at lower levels in open flowers, stems and cauline leaves. Expressed in young seedling in the hydathodes, shoot apical meristem, root tips and lateral root primordia.

The protein resides in the nucleus. In terms of biological role, regulates tapetum degeneration and pollen maturation during anther development. This chain is Probable F-box protein At3g61730 (RMF), found in Arabidopsis thaliana (Mouse-ear cress).